A 159-amino-acid chain; its full sequence is 2-C-methyl-D-erythritol 2,4-cyclodiphosphate synthase (159 aa).

A divalent metal cation is bound by residues D10 and H12. Residues 10 to 12 (DVH) and 36 to 37 (HS) each bind 4-CDP-2-C-methyl-D-erythritol 2-phosphate. A divalent metal cation is bound at residue H44. Residues 58–60 (DIG), 63–67 (FSDTD), and R144 each bind 4-CDP-2-C-methyl-D-erythritol 2-phosphate.

Belongs to the IspF family. Homotrimer. A divalent metal cation serves as cofactor.

The enzyme catalyses 4-CDP-2-C-methyl-D-erythritol 2-phosphate = 2-C-methyl-D-erythritol 2,4-cyclic diphosphate + CMP. It functions in the pathway isoprenoid biosynthesis; isopentenyl diphosphate biosynthesis via DXP pathway; isopentenyl diphosphate from 1-deoxy-D-xylulose 5-phosphate: step 4/6. In terms of biological role, involved in the biosynthesis of isopentenyl diphosphate (IPP) and dimethylallyl diphosphate (DMAPP), two major building blocks of isoprenoid compounds. Catalyzes the conversion of 4-diphosphocytidyl-2-C-methyl-D-erythritol 2-phosphate (CDP-ME2P) to 2-C-methyl-D-erythritol 2,4-cyclodiphosphate (ME-CPP) with a corresponding release of cytidine 5-monophosphate (CMP). The polypeptide is 2-C-methyl-D-erythritol 2,4-cyclodiphosphate synthase (Paraburkholderia xenovorans (strain LB400)).